The sequence spans 243 residues: Thaumatin-like protein 1 (243 aa).

The first 22 residues, methionine 1–serine 22, serve as a signal peptide directing secretion. 8 cysteine pairs are disulfide-bonded: cysteine 31–cysteine 242, cysteine 79–cysteine 88, cysteine 93–cysteine 100, cysteine 148–cysteine 231, cysteine 153–cysteine 214, cysteine 161–cysteine 177, cysteine 181–cysteine 190, and cysteine 191–cysteine 201.

The protein belongs to the thaumatin family.

The protein resides in the secreted. The protein localises to the extracellular space. It is found in the apoplast. Functionally, possesses antifungal activity. This Castanea sativa (Sweet chestnut) protein is Thaumatin-like protein 1 (TL1).